A 611-amino-acid chain; its full sequence is Dihydroxy-acid dehydratase (611 aa).

Aspartate 81 provides a ligand contact to Mg(2+). Cysteine 122 provides a ligand contact to [2Fe-2S] cluster. Residues aspartate 123 and lysine 124 each contribute to the Mg(2+) site. The residue at position 124 (lysine 124) is an N6-carboxylysine. Cysteine 195 contributes to the [2Fe-2S] cluster binding site. Residue glutamate 491 participates in Mg(2+) binding. The Proton acceptor role is filled by serine 517.

The protein belongs to the IlvD/Edd family. As to quaternary structure, homodimer. The cofactor is [2Fe-2S] cluster. Mg(2+) serves as cofactor.

The enzyme catalyses (2R)-2,3-dihydroxy-3-methylbutanoate = 3-methyl-2-oxobutanoate + H2O. It carries out the reaction (2R,3R)-2,3-dihydroxy-3-methylpentanoate = (S)-3-methyl-2-oxopentanoate + H2O. Its pathway is amino-acid biosynthesis; L-isoleucine biosynthesis; L-isoleucine from 2-oxobutanoate: step 3/4. It participates in amino-acid biosynthesis; L-valine biosynthesis; L-valine from pyruvate: step 3/4. Its function is as follows. Functions in the biosynthesis of branched-chain amino acids. Catalyzes the dehydration of (2R,3R)-2,3-dihydroxy-3-methylpentanoate (2,3-dihydroxy-3-methylvalerate) into 2-oxo-3-methylpentanoate (2-oxo-3-methylvalerate) and of (2R)-2,3-dihydroxy-3-methylbutanoate (2,3-dihydroxyisovalerate) into 2-oxo-3-methylbutanoate (2-oxoisovalerate), the penultimate precursor to L-isoleucine and L-valine, respectively. This Histophilus somni (strain 2336) (Haemophilus somnus) protein is Dihydroxy-acid dehydratase.